We begin with the raw amino-acid sequence, 79 residues long: Ribonuclease P protein component 1 (79 aa).

It belongs to the eukaryotic/archaeal RNase P protein component 1 family. Consists of a catalytic RNA component and at least 4-5 protein subunits.

Its subcellular location is the cytoplasm. It catalyses the reaction Endonucleolytic cleavage of RNA, removing 5'-extranucleotides from tRNA precursor.. Part of ribonuclease P, a protein complex that generates mature tRNA molecules by cleaving their 5'-ends. This Saccharolobus solfataricus (strain ATCC 35092 / DSM 1617 / JCM 11322 / P2) (Sulfolobus solfataricus) protein is Ribonuclease P protein component 1.